The following is a 372-amino-acid chain: MVMKSGRYIGVMSGTSLDGVDVVLAAINDKVVAQQASYSHPFPYELKQKILAVCQGQQTTLSAIGRLDYELGSLFAEAVQGLLIKTGLTASDITAVGCHGQTVWHEPNSHTPFTMQLGDNNRIAALTGITVVGDFRRRDMAYGGQGAPLVPAFHFAVLGHLTERRIILNIGGIANITTLLPGSPVKGYDTGPGNMLMDSWVWRHQKKPYDKDAQWAREGVVNNKLLGQMLSDHYFSRPAPKSTGREYFNMSWLEAQLVNFPDIPPVDVQATLAELTAASVSQQIMLSGGCERLLVCGGGAHNPQIMSRLSALLPGTEVCPTDKYGLSGDDMEALAFAWLAFRTMSGAPGNLPSVTGASTETILGAIYPVINQ.

14-21 (GTSLDGVD) provides a ligand contact to ATP.

The protein belongs to the anhydro-N-acetylmuramic acid kinase family.

The enzyme catalyses 1,6-anhydro-N-acetyl-beta-muramate + ATP + H2O = N-acetyl-D-muramate 6-phosphate + ADP + H(+). The protein operates within amino-sugar metabolism; 1,6-anhydro-N-acetylmuramate degradation. Its pathway is cell wall biogenesis; peptidoglycan recycling. In terms of biological role, catalyzes the specific phosphorylation of 1,6-anhydro-N-acetylmuramic acid (anhMurNAc) with the simultaneous cleavage of the 1,6-anhydro ring, generating MurNAc-6-P. Is required for the utilization of anhMurNAc either imported from the medium or derived from its own cell wall murein, and thus plays a role in cell wall recycling. The sequence is that of Anhydro-N-acetylmuramic acid kinase from Photorhabdus laumondii subsp. laumondii (strain DSM 15139 / CIP 105565 / TT01) (Photorhabdus luminescens subsp. laumondii).